The primary structure comprises 110 residues: Phosphoribosyl-ATP pyrophosphatase (110 aa).

It belongs to the PRA-PH family.

It is found in the cytoplasm. It carries out the reaction 1-(5-phospho-beta-D-ribosyl)-ATP + H2O = 1-(5-phospho-beta-D-ribosyl)-5'-AMP + diphosphate + H(+). Its pathway is amino-acid biosynthesis; L-histidine biosynthesis; L-histidine from 5-phospho-alpha-D-ribose 1-diphosphate: step 2/9. The sequence is that of Phosphoribosyl-ATP pyrophosphatase from Pseudomonas savastanoi pv. phaseolicola (strain 1448A / Race 6) (Pseudomonas syringae pv. phaseolicola (strain 1448A / Race 6)).